Here is a 254-residue protein sequence, read N- to C-terminus: E3 ubiquitin-protein ligase NEURL3 (254 aa).

The region spanning A17–P174 is the NHR domain. The RING-type zinc-finger motif lies at C197 to R236.

It localises to the cytoplasm. It catalyses the reaction S-ubiquitinyl-[E2 ubiquitin-conjugating enzyme]-L-cysteine + [acceptor protein]-L-lysine = [E2 ubiquitin-conjugating enzyme]-L-cysteine + N(6)-ubiquitinyl-[acceptor protein]-L-lysine.. Its pathway is protein modification; protein ubiquitination. Its function is as follows. E3 ubiquitin-protein ligase that plays a role in various biological processes such as lung development or innate immunity. Seems to utilize UBE2E1. Promotes innate antiviral response by catalyzing 'Lys-63'-linked ubiquitination of IRF7. Also inhibits hepatitis C virus assembly by directly binding to viral E1 envelope glycoprotein to disrupt its interaction with E2. Plays an essential role in TLR4-mediated activation of MAPK pathways by promoting 'Lys-48'-linked polyubiquitination of the phosphatase DUSP1/MKP1. This Rattus norvegicus (Rat) protein is E3 ubiquitin-protein ligase NEURL3 (Neurl3).